The primary structure comprises 211 residues: Protein U63 (211 aa).

This sequence belongs to the herpesviridae UL92 family.

The protein is Protein U63 (U63) of Human herpesvirus 7 (strain JI) (HHV-7).